A 579-amino-acid polypeptide reads, in one-letter code: Insulin-like growth factor 2 mRNA-binding protein 3 (579 aa).

RRM domains follow at residues 2–75 and 81–156; these read NKLY…HSVP and RKLQ…YIPD. Positions 160–192 are disordered; sequence AQQNPLQQPRGRRGLGQRGSSRQGSPGSVSKQK. Residues 177–187 show a composition bias toward low complexity; sequence RGSSRQGSPGS. At serine 184 the chain carries Phosphoserine. 3 KH domains span residues 195 to 260, 276 to 343, and 405 to 470; these read DLPL…CKSI, EIPL…EEEI, and TETV…QGRI. Glycyl lysine isopeptide (Lys-Gly) (interchain with G-Cter in SUMO2) cross-links involve residues lysine 450 and lysine 475. A KH 4 domain is found at 487–553; it reads KLEAHIRVPS…YACQVAQRKI (67 aa). Threonine 528 is modified (phosphothreonine).

This sequence belongs to the RRM IMP/VICKZ family. As to quaternary structure, can form homooligomers and heterooligomers with IGF2BP1 and IGF2BP3 in an RNA-dependent manner. Interacts with IGF2BP1. Interacts with ELAVL1, DHX9, HNRNPU, MATR3 and PABPC1. In terms of tissue distribution, expressed in fetal liver, fetal lung, fetal kidney, fetal thymus, fetal placenta, fetal follicles of ovary and gonocytes of testis, growing oocytes, spermatogonia and semen (at protein level). Expressed in cervix adenocarcinoma, in testicular, pancreatic and renal-cell carcinomas (at protein level). Expressed ubiquitously during fetal development at 8 and 14 weeks of gestation. Expressed in ovary, testis, brain, placenta, pancreatic cancer tissues and pancreatic cancer cell lines.

It is found in the nucleus. It localises to the cytoplasm. The protein resides in the P-body. The protein localises to the stress granule. In terms of biological role, RNA-binding factor that may recruit target transcripts to cytoplasmic protein-RNA complexes (mRNPs). This transcript 'caging' into mRNPs allows mRNA transport and transient storage. It also modulates the rate and location at which target transcripts encounter the translational apparatus and shields them from endonuclease attacks or microRNA-mediated degradation. Preferentially binds to N6-methyladenosine (m6A)-containing mRNAs and increases their stability. Binds to the 3'-UTR of CD44 mRNA and stabilizes it, hence promotes cell adhesion and invadopodia formation in cancer cells. Binds to beta-actin/ACTB and MYC transcripts. Increases MYC mRNA stability by binding to the coding region instability determinant (CRD) and binding is enhanced by m6A-modification of the CRD. Binds to the 5'-UTR of the insulin-like growth factor 2 (IGF2) mRNAs. The sequence is that of Insulin-like growth factor 2 mRNA-binding protein 3 (IGF2BP3) from Homo sapiens (Human).